The chain runs to 115 residues: MDRNEIFEKIMRLEMNVNQLSKETSELKALAVELVEENVALQLENDNLKKVLGNDEPTTIDTANSKPAKAVKKPLPSKDNLAILYGEGFHICKGELFGKHRHGEDCLFCLEVLSD.

Residues His90, Cys92, Cys106, and Cys109 each contribute to the Zn(2+) site.

Belongs to the YabA family. In terms of assembly, homotetramer. Interacts with both DnaA and DnaN, acting as a bridge between these two proteins. Zn(2+) serves as cofactor.

It localises to the cytoplasm. It is found in the nucleoid. Its function is as follows. Involved in control of chromosome replication initiation. Inhibits the cooperative binding of DnaA to the oriC region, thus negatively regulating initiation of chromosome replication. Inhibits the ability of DnaA-ATP to form a helix on DNA; does not disassemble preformed DnaA-DNA helices. Decreases the residence time of DnaA on the chromosome at its binding sites (oriC, replication forks and promoter-binding sites). Tethers DnaA to the replication machinery via the DNA polymerase beta sliding clamp subunit (dnaN). Associates with oriC and other DnaA targets on the chromosome in a DnaA-dependent manner. The sequence is that of Replication initiation control protein YabA from Staphylococcus aureus (strain bovine RF122 / ET3-1).